Reading from the N-terminus, the 152-residue chain is Leukocyte-associated immunoglobulin-like receptor 2 (152 aa).

An N-terminal signal peptide occupies residues 1–21 (MSPHLTALLGLVLCLAQTIHT). The Ig-like C2-type domain maps to 29–117 (PSISAEPGTV…GWSEHSDFLE (89 aa)). A disulfide bridge connects residues Cys-49 and Cys-101. The segment at 120–152 (VKESSGGPDSPDTEPGSSAGTVPGTEASGFDAP) is disordered.

It is found in the secreted. The chain is Leukocyte-associated immunoglobulin-like receptor 2 (LAIR2) from Homo sapiens (Human).